Here is a 226-residue protein sequence, read N- to C-terminus: MKYNNILKGKFILRPNRFIAYVEIDGNEEVCHVKNTGRCKELLIPNATVFIQKNDNPKRKTKFSLIGVVKGDRMINMDSQVTNKVVHEWILKGNLLKDVTLIKPEAKYKNSRFDFYVETKHKKIFIEVKGVTLENNGIVKFPDAPTERGVKHLRELIDCIKEGYDAYVIFVIQMKEVVHFEPNVETHKEFGDTLKYAKENGVNIVAVDCLVDEDSINIRDYVDVIL.

It belongs to the SfsA family.

The polypeptide is Sugar fermentation stimulation protein homolog (Clostridium beijerinckii (strain ATCC 51743 / NCIMB 8052) (Clostridium acetobutylicum)).